A 177-amino-acid chain; its full sequence is Calcium-binding protein CML38 (177 aa).

Residues 1 to 11 (MKNNTQPQSSF) are compositionally biased toward polar residues. The interval 1–44 (MKNNTQPQSSFKKLCRKLSPKREDSAGEIQQHNSSNGEDKNREL) is disordered. EF-hand domains follow at residues 39–74 (DKNRELEAVFSYMDANRDGRISPEELQKSFMTLGEQ), 75–110 (LSDEEAVAAVRLSDTDGDGMLDFEEFSQLIKVDDEE), 111–146 (EKKMELKGAFRLYIAEGEDCITPRSLKMMLKKLGES), and 147–177 (RTTDDCRVMISAFDLNADGVLSFDEFALMMR). Positions 52, 54, 56, 58, 63, 88, 90, 92, 94, and 99 each coordinate Ca(2+). 4 residues coordinate Ca(2+): aspartate 160, asparagine 162, aspartate 164, and glutamate 171.

In terms of assembly, binds to ABCG36. Expressed in cotyledons and guard cells of young leaves. In mature root, expressed in the epidermis, trichoblasts, young lateral root and root tip. Expressed from stage 9 to 15 of flower development in anther wall.

In terms of biological role, potential calcium sensor that binds calcium in vitro. This is Calcium-binding protein CML38 from Arabidopsis thaliana (Mouse-ear cress).